Here is a 317-residue protein sequence, read N- to C-terminus: Putative 12-oxophytodienoate reductase 10 (317 aa).

26–28 provides a ligand contact to FMN; the sequence is PVG. 117-120 is a binding site for substrate; it reads HGAN. Residue Tyr122 is the Proton donor of the active site. Residue Arg169 participates in FMN binding. Arg209 contributes to the substrate binding site. Residues Gly244 and 265 to 266 contribute to the FMN site; that span reads GR.

Belongs to the NADH:flavin oxidoreductase/NADH oxidase family. The cofactor is FMN.

In terms of biological role, putative oxophytodienoate reductase that may be involved in the biosynthesis or metabolism of oxylipin signaling molecules. The chain is Putative 12-oxophytodienoate reductase 10 (OPR10) from Oryza sativa subsp. japonica (Rice).